The following is a 331-amino-acid chain: Taste receptor type 2 member 38 (331 aa).

The Extracellular portion of the chain corresponds to Met1–Ser17. Residues Phe18–Leu38 form a helical membrane-spanning segment. The Cytoplasmic portion of the chain corresponds to Val39–Asp54. A helical membrane pass occupies residues Ile55–Ala75. Over Ile76 to Ala94 the chain is Extracellular. Residues Ile95–Leu115 traverse the membrane as a helical segment. The Cytoplasmic segment spans residues Leu116–Gln142. The chain crosses the membrane as a helical span at residues Met143 to Phe163. Over Ser164 to Asn198 the chain is Extracellular. A glycan (N-linked (GlcNAc...) asparagine) is linked at Asn177. The helical transmembrane segment at Val199–Leu219 threads the bilayer. Residues Gly220–Arg243 lie on the Cytoplasmic side of the membrane. A helical membrane pass occupies residues Ala244–Ile264. Topologically, residues Ser265–Gly276 are extracellular. The helical transmembrane segment at Gly277 to Ile297 threads the bilayer. At Ser298–Leu331 the chain is on the cytoplasmic side.

It belongs to the G-protein coupled receptor T2R family. In terms of tissue distribution, expressed in tongue, stomach and duodenum.

The protein resides in the membrane. Its function is as follows. Putative taste receptor which may play a role in the perception of bitterness. In Rattus norvegicus (Rat), this protein is Taste receptor type 2 member 38 (Tas2r38).